The primary structure comprises 600 residues: Aspartate--tRNA(Asp/Asn) ligase (600 aa).

E187 contributes to the L-aspartate binding site. Residues 211-214 form an aspartate region; the sequence is QIFK. L-aspartate contacts are provided by R233 and H463. Position 233–235 (233–235) interacts with ATP; the sequence is RDE. E497 lines the ATP pocket. R504 is a binding site for L-aspartate. 549 to 552 serves as a coordination point for ATP; the sequence is GIDR.

Belongs to the class-II aminoacyl-tRNA synthetase family. Type 1 subfamily. In terms of assembly, homodimer.

It is found in the cytoplasm. The enzyme catalyses tRNA(Asx) + L-aspartate + ATP = L-aspartyl-tRNA(Asx) + AMP + diphosphate. In terms of biological role, aspartyl-tRNA synthetase with relaxed tRNA specificity since it is able to aspartylate not only its cognate tRNA(Asp) but also tRNA(Asn). Reaction proceeds in two steps: L-aspartate is first activated by ATP to form Asp-AMP and then transferred to the acceptor end of tRNA(Asp/Asn). In Wolbachia sp. subsp. Brugia malayi (strain TRS), this protein is Aspartate--tRNA(Asp/Asn) ligase.